Reading from the N-terminus, the 207-residue chain is dTTP/UTP pyrophosphatase (207 aa).

The Proton acceptor role is filled by D87.

The protein belongs to the Maf family. YhdE subfamily. A divalent metal cation is required as a cofactor.

It localises to the cytoplasm. It catalyses the reaction dTTP + H2O = dTMP + diphosphate + H(+). The catalysed reaction is UTP + H2O = UMP + diphosphate + H(+). Its function is as follows. Nucleoside triphosphate pyrophosphatase that hydrolyzes dTTP and UTP. May have a dual role in cell division arrest and in preventing the incorporation of modified nucleotides into cellular nucleic acids. The chain is dTTP/UTP pyrophosphatase from Bordetella bronchiseptica (strain ATCC BAA-588 / NCTC 13252 / RB50) (Alcaligenes bronchisepticus).